We begin with the raw amino-acid sequence, 213 residues long: Protein ras-1 (213 aa).

G15–S22 contributes to the GTP binding site. The Effector region motif lies at Y37–Y45. GTP is bound by residues D62–Q66 and N121–D124. Position 210 is a cysteine methyl ester (C210). C210 carries the S-farnesyl cysteine lipid modification. The propeptide at I211–M213 is removed in mature form.

It belongs to the small GTPase superfamily. Ras family.

It is found in the cell membrane. It carries out the reaction GTP + H2O = GDP + phosphate + H(+). Its function is as follows. Ras proteins bind GDP/GTP and possess intrinsic GTPase activity. The sequence is that of Protein ras-1 (ras-1) from Neurospora crassa (strain ATCC 24698 / 74-OR23-1A / CBS 708.71 / DSM 1257 / FGSC 987).